We begin with the raw amino-acid sequence, 450 residues long: Divalent metal cation transporter MntH (450 aa).

Helical transmembrane passes span 34-54 (LSFL…GNWI), 61-81 (AQYG…AMLL), 108-128 (IAII…IAEV), 141-161 (IPLI…LFIM), 170-190 (AIVG…VYIS), 212-232 (GILY…NLYL), 263-283 (IQLS…ASLF), 305-325 (PVLG…ALLA), 361-381 (SLAV…AAKI), 383-403 (QLLV…LIPL), and 422-442 (VNII…YLIV).

The protein belongs to the NRAMP family.

Its subcellular location is the cell membrane. H(+)-stimulated, divalent metal cation uptake system. The chain is Divalent metal cation transporter MntH from Staphylococcus aureus (strain bovine RF122 / ET3-1).